Reading from the N-terminus, the 278-residue chain is Proteolipid protein DM beta (278 aa).

4 helical membrane passes run 30-46 (LIATILLYAGVALFCGC), 84-100 (VIYGVAAAFFVYGILLM), 130-146 (FIMLTYIFMLAWLGVTA), and 213-229 (LFIVALAGAGAAVIAMV).

The protein belongs to the myelin proteolipid protein family.

The protein localises to the membrane. The polypeptide is Proteolipid protein DM beta (Squalus acanthias (Spiny dogfish)).